Reading from the N-terminus, the 122-residue chain is Glycine cleavage system H protein (122 aa).

The region spanning 19–101 is the Lipoyl-binding domain; sequence VATVGITDYA…QGKAWFFKIK (83 aa). Lysine 60 is modified (N6-lipoyllysine).

Belongs to the GcvH family. As to quaternary structure, the glycine cleavage system is composed of four proteins: P, T, L and H. (R)-lipoate is required as a cofactor.

Its function is as follows. The glycine cleavage system catalyzes the degradation of glycine. The H protein shuttles the methylamine group of glycine from the P protein to the T protein. This chain is Glycine cleavage system H protein, found in Bradyrhizobium diazoefficiens (strain JCM 10833 / BCRC 13528 / IAM 13628 / NBRC 14792 / USDA 110).